The chain runs to 41 residues: Photosystem I reaction center subunit IX (41 aa).

The chain crosses the membrane as a helical span at residues 7–27 (YLSVAPVLSTLWFGALAGLLI).

This sequence belongs to the PsaJ family.

The protein localises to the plastid. The protein resides in the chloroplast thylakoid membrane. Functionally, may help in the organization of the PsaE and PsaF subunits. The sequence is that of Photosystem I reaction center subunit IX from Jasminum nudiflorum (Winter jasmine).